Consider the following 427-residue polypeptide: L-rhamnose isomerase (427 aa).

Residues His264, Asp296, and Asp298 each coordinate Mn(2+).

The protein belongs to the rhamnose isomerase family. Mn(2+) is required as a cofactor.

The protein localises to the cytoplasm. It catalyses the reaction L-rhamnopyranose = L-rhamnulose. It functions in the pathway carbohydrate degradation; L-rhamnose degradation; glycerone phosphate from L-rhamnose: step 1/3. Its function is as follows. Catalyzes the interconversion of L-rhamnose and L-rhamnulose. The chain is L-rhamnose isomerase from Rhodopirellula baltica (strain DSM 10527 / NCIMB 13988 / SH1).